A 547-amino-acid polypeptide reads, in one-letter code: CAP-Gly domain-containing linker protein 3 (547 aa).

A disordered region spans residues methionine 1–alanine 49. Over residues glutamate 16 to valine 27 the composition is skewed to acidic residues. ANK repeat units follow at residues threonine 117 to arginine 158, threonine 160 to serine 191, and asparagine 197 to arginine 229. Residues glycine 314–serine 356 form the CAP-Gly 1 domain. Residues aspartate 365–glycine 413 form a disordered region. Positions proline 367–threonine 377 are enriched in low complexity. The residue at position 374 (threonine 374) is a Phosphothreonine. Residues glycine 387–threonine 399 show a composition bias toward basic residues. Positions proline 400–glutamine 410 are enriched in polar residues. Serine 401 is subject to Phosphoserine. In terms of domain architecture, CAP-Gly 2 spans glycine 436–proline 478. The tract at residues serine 488–serine 547 is goLD. S-palmitoyl cysteine attachment occurs at residues cysteine 534 and cysteine 535.

In terms of assembly, homodimer. Interacts with AKT1 and AKT2; when AKT1 and AKT2 are phosphorylated and activated, affinity is higher for AKT2. Interacts with ZDHHC13 (via ANK repeats). Interacts with ZDHHC17 (via ANK repeats). Post-translationally, palmitoylation by ZDHHC17 regulates association with the plasma membrane.

The protein localises to the cell membrane. The protein resides in the cytoplasm. Its subcellular location is the golgi apparatus. It localises to the golgi stack. Its function is as follows. Functions as a cytoplasmic linker protein. Involved in TGN-endosome dynamics. May modulate the cellular compartmentalization of AKT kinase family and promote its cell membrane localization, thereby playing a role in glucose transport in adipocytes. This chain is CAP-Gly domain-containing linker protein 3 (CLIP3), found in Homo sapiens (Human).